We begin with the raw amino-acid sequence, 338 residues long: Glycerol-3-phosphate dehydrogenase [NAD(P)+] (338 aa).

Residues Ser13, Trp14, and Lys108 each contribute to the NADPH site. Sn-glycerol 3-phosphate contacts are provided by Lys108, Gly139, and Ser141. Ala143 provides a ligand contact to NADPH. Positions 194, 247, 257, 258, and 259 each coordinate sn-glycerol 3-phosphate. Lys194 serves as the catalytic Proton acceptor. Arg258 provides a ligand contact to NADPH. NADPH-binding residues include Val282 and Glu284.

Belongs to the NAD-dependent glycerol-3-phosphate dehydrogenase family.

Its subcellular location is the cytoplasm. The enzyme catalyses sn-glycerol 3-phosphate + NAD(+) = dihydroxyacetone phosphate + NADH + H(+). It catalyses the reaction sn-glycerol 3-phosphate + NADP(+) = dihydroxyacetone phosphate + NADPH + H(+). Its pathway is membrane lipid metabolism; glycerophospholipid metabolism. Functionally, catalyzes the reduction of the glycolytic intermediate dihydroxyacetone phosphate (DHAP) to sn-glycerol 3-phosphate (G3P), the key precursor for phospholipid synthesis. This chain is Glycerol-3-phosphate dehydrogenase [NAD(P)+], found in Streptococcus pneumoniae (strain Taiwan19F-14).